The chain runs to 217 residues: Protein TNT (217 aa).

A disordered region spans residues 1 to 217 (MSLVPGQHCS…HSTKQTGGKE (217 aa)). Composition is skewed to polar residues over residues 20–36 (SPITMGTEPATQNTEFS) and 45–61 (TSPQRGHSQHSEASQGP). 2 stretches are compositionally biased toward low complexity: residues 91-104 (EPSLQSPSLELQSP) and 128-139 (QSSESHVSSVQH). Composition is skewed to polar residues over residues 177–191 (RLNTQAASNQTSQLG) and 207–217 (AHSTKQTGGKE).

As to expression, preferentially expressed in teratocarcinoma rather than in normal testis.

The protein is Protein TNT (C16orf82) of Homo sapiens (Human).